We begin with the raw amino-acid sequence, 1708 residues long: Clathrin heavy chain 2 (1708 aa).

The interval 1–492 is globular terminal domain; the sequence is MAAANAPIAM…VDNDLALKIY (492 aa). 7 WD40-like repeat regions span residues 25–67, 68–113, 114–155, 156–205, 206–270, 271–314, and 315–343; these read FVTF…RPIT, ADSA…MPEQ, VVFW…ANLA, NNQI…QALE, AHAA…PDFQ, DDFP…ISPD, and PIFLTAESSASGGFYAINRRGQVLHATVN. The segment at 462–478 is binding site for the uncoating ATPase, involved in lattice disassembly; the sequence is ENWLAEDKLECSEELGD. Residues 493-536 form a flexible linker region; sequence IKARATPKVVAAFAERREFDKILIYSKQVGYTPDYLFLLQTILR. The distal segment stretch occupies residues 537–648; sequence TDPQGAVNFA…RALQHYTELP (112 aa). The interval 537-1708 is heavy chain arm; sequence TDPQGAVNFA…AYGMPPMGSY (1172 aa). CHCR repeat units lie at residues 551–697, 700–842, 847–986, 993–1138, 1142–1283, 1288–1434, and 1437–1580; these read QMEG…QIVV, AKEY…PEDF, ILSV…QLID, LPES…VSEA, FIRA…FRLA, LNII…DLIN, and LNVL…KECF. A proximal segment region spans residues 653-1708; that stretch reads VMVNTHAIEP…AYGMPPMGSY (1056 aa). Positions 1227–1536 are involved in binding clathrin light chain; that stretch reads AAKIIYAFIS…YIYKKAGRWK (310 aa). Residues 1564 to 1708 form a trimerization region; the sequence is SEDLLVYFIE…AYGMPPMGSY (145 aa).

This sequence belongs to the clathrin heavy chain family. As to quaternary structure, clathrin triskelions, composed of 3 heavy chains and 3 light chains, are the basic subunits of the clathrin coat.

Its subcellular location is the cytoplasmic vesicle membrane. The protein resides in the membrane. The protein localises to the coated pit. Clathrin is the major protein of the polyhedral coat of coated pits and vesicles. The sequence is that of Clathrin heavy chain 2 from Oryza sativa subsp. japonica (Rice).